Reading from the N-terminus, the 159-residue chain is Phosphopantetheine adenylyltransferase (159 aa).

Thr-10 is a substrate binding site. Residues 10-11 and His-18 contribute to the ATP site; that span reads TF. Residues Lys-42, Leu-74, and Arg-88 each contribute to the substrate site. Residues 89-91, Glu-99, and 124-130 contribute to the ATP site; these read GLR and FAYVSSS.

It belongs to the bacterial CoaD family. As to quaternary structure, homohexamer. Requires Mg(2+) as cofactor.

Its subcellular location is the cytoplasm. It carries out the reaction (R)-4'-phosphopantetheine + ATP + H(+) = 3'-dephospho-CoA + diphosphate. It functions in the pathway cofactor biosynthesis; coenzyme A biosynthesis; CoA from (R)-pantothenate: step 4/5. In terms of biological role, reversibly transfers an adenylyl group from ATP to 4'-phosphopantetheine, yielding dephospho-CoA (dPCoA) and pyrophosphate. The chain is Phosphopantetheine adenylyltransferase from Thioalkalivibrio sulfidiphilus (strain HL-EbGR7).